We begin with the raw amino-acid sequence, 270 residues long: ATP synthase subunit a (270 aa).

5 helical membrane passes run 37–57 (NVHI…LWVF), 98–118 (IAPL…MDLV), 143–163 (DVNI…YYSI), 217–237 (VVFI…GALP), and 239–259 (AIFH…LTIV).

Belongs to the ATPase A chain family. As to quaternary structure, F-type ATPases have 2 components, CF(1) - the catalytic core - and CF(0) - the membrane proton channel. CF(1) has five subunits: alpha(3), beta(3), gamma(1), delta(1), epsilon(1). CF(0) has three main subunits: a(1), b(2) and c(9-12). The alpha and beta chains form an alternating ring which encloses part of the gamma chain. CF(1) is attached to CF(0) by a central stalk formed by the gamma and epsilon chains, while a peripheral stalk is formed by the delta and b chains.

It is found in the cell inner membrane. In terms of biological role, key component of the proton channel; it plays a direct role in the translocation of protons across the membrane. The protein is ATP synthase subunit a of Aliivibrio fischeri (strain ATCC 700601 / ES114) (Vibrio fischeri).